A 124-amino-acid polypeptide reads, in one-letter code: Large ribosomal subunit protein bL17 (124 aa).

The protein belongs to the bacterial ribosomal protein bL17 family. In terms of assembly, part of the 50S ribosomal subunit. Contacts protein L32.

This Mycoplasma pneumoniae (strain ATCC 29342 / M129 / Subtype 1) (Mycoplasmoides pneumoniae) protein is Large ribosomal subunit protein bL17.